Reading from the N-terminus, the 201-residue chain is Large ribosomal subunit protein uL4 (201 aa).

A disordered region spans residues 44–71 (RAQKTRAEVTGSGKKPWRQKGTGRARSG).

It belongs to the universal ribosomal protein uL4 family. As to quaternary structure, part of the 50S ribosomal subunit.

Functionally, one of the primary rRNA binding proteins, this protein initially binds near the 5'-end of the 23S rRNA. It is important during the early stages of 50S assembly. It makes multiple contacts with different domains of the 23S rRNA in the assembled 50S subunit and ribosome. In terms of biological role, forms part of the polypeptide exit tunnel. This chain is Large ribosomal subunit protein uL4, found in Edwardsiella ictaluri (strain 93-146).